The primary structure comprises 208 residues: Uracil phosphoribosyltransferase (208 aa).

5-phospho-alpha-D-ribose 1-diphosphate contacts are provided by residues R77, R102, and 128–136; that span reads DPMLATGGT. Residues I191 and 196–198 each bind uracil; that span reads GDI. D197 provides a ligand contact to 5-phospho-alpha-D-ribose 1-diphosphate.

Belongs to the UPRTase family. Mg(2+) serves as cofactor.

It catalyses the reaction UMP + diphosphate = 5-phospho-alpha-D-ribose 1-diphosphate + uracil. Its pathway is pyrimidine metabolism; UMP biosynthesis via salvage pathway; UMP from uracil: step 1/1. Its activity is regulated as follows. Allosterically activated by GTP. In terms of biological role, catalyzes the conversion of uracil and 5-phospho-alpha-D-ribose 1-diphosphate (PRPP) to UMP and diphosphate. The polypeptide is Uracil phosphoribosyltransferase (Aquifex aeolicus (strain VF5)).